We begin with the raw amino-acid sequence, 117 residues long: Hainantoxin-XV-3 (117 aa).

Positions 1 to 20 (MKLCAVIIASLLVCVAVASS) are cleaved as a signal peptide. The segment at 20 to 55 (SSDNQKEFAQEKEMTREETQSLGEHEKDDEVTGSEE) is disordered. Residues 21–56 (SDNQKEFAQEKEMTREETQSLGEHEKDDEVTGSEER) constitute a propeptide that is removed on maturation. The span at 23–55 (NQKEFAQEKEMTREETQSLGEHEKDDEVTGSEE) shows a compositional bias: basic and acidic residues. Cystine bridges form between cysteine 58–cysteine 72, cysteine 65–cysteine 78, cysteine 69–cysteine 115, and cysteine 71–cysteine 91.

This sequence belongs to the neurotoxin 03 (Tx2) family. 02 subfamily. HNTX-XV sub-subfamily. As to expression, expressed by the venom gland.

Its subcellular location is the secreted. Its function is as follows. Putative ion channel inhibitor. The polypeptide is Hainantoxin-XV-3 (Cyriopagopus hainanus (Chinese bird spider)).